The sequence spans 276 residues: Large ribosomal subunit protein uL2 (276 aa).

2 disordered regions span residues 14-58 (RNAS…GGGH) and 219-276 (PITR…KNRK). The segment covering 16–27 (ASVSDFSELTRS) has biased composition (polar residues). The segment covering 255–276 (RRPKKASNKMIVRRRPSGKNRK) has biased composition (basic residues).

Belongs to the universal ribosomal protein uL2 family. In terms of assembly, part of the 50S ribosomal subunit. Forms a bridge to the 30S subunit in the 70S ribosome.

In terms of biological role, one of the primary rRNA binding proteins. Required for association of the 30S and 50S subunits to form the 70S ribosome, for tRNA binding and peptide bond formation. It has been suggested to have peptidyltransferase activity; this is somewhat controversial. Makes several contacts with the 16S rRNA in the 70S ribosome. The protein is Large ribosomal subunit protein uL2 of Bifidobacterium longum (strain DJO10A).